Here is a 482-residue protein sequence, read N- to C-terminus: Aspartyl/glutamyl-tRNA(Asn/Gln) amidotransferase subunit B (482 aa).

The protein belongs to the GatB/GatE family. GatB subfamily. Heterotrimer of A, B and C subunits.

It carries out the reaction L-glutamyl-tRNA(Gln) + L-glutamine + ATP + H2O = L-glutaminyl-tRNA(Gln) + L-glutamate + ADP + phosphate + H(+). It catalyses the reaction L-aspartyl-tRNA(Asn) + L-glutamine + ATP + H2O = L-asparaginyl-tRNA(Asn) + L-glutamate + ADP + phosphate + 2 H(+). In terms of biological role, allows the formation of correctly charged Asn-tRNA(Asn) or Gln-tRNA(Gln) through the transamidation of misacylated Asp-tRNA(Asn) or Glu-tRNA(Gln) in organisms which lack either or both of asparaginyl-tRNA or glutaminyl-tRNA synthetases. The reaction takes place in the presence of glutamine and ATP through an activated phospho-Asp-tRNA(Asn) or phospho-Glu-tRNA(Gln). In Ehrlichia canis (strain Jake), this protein is Aspartyl/glutamyl-tRNA(Asn/Gln) amidotransferase subunit B.